The primary structure comprises 97 residues: Plastocyanin (97 aa).

The 97-residue stretch at Ala-1 to Thr-97 folds into the Plastocyanin-like domain. His-37, Cys-82, His-85, and Met-90 together coordinate Cu cation.

It belongs to the plastocyanin family. Requires Cu(2+) as cofactor.

Its subcellular location is the plastid. It is found in the chloroplast thylakoid membrane. Functionally, participates in electron transfer between P700 and the cytochrome b6-f complex in photosystem I. The protein is Plastocyanin (PETE) of Daucus carota (Wild carrot).